A 150-amino-acid polypeptide reads, in one-letter code: Non-specific lipid transfer protein GPI-anchored 7 (150 aa).

The N-terminal stretch at 1-25 (MTKTMMIFAAAMTVMALLLVPTIEA) is a signal peptide. Intrachain disulfides connect C29-C66, C36-C50, C51-C92, and C64-C101. Residues N41, N79, and N93 are each glycosylated (N-linked (GlcNAc...) asparagine). A disordered region spans residues 103–125 (AKGAPSPKASLPPPAPAGNTKKD). A lipid anchor (GPI-anchor amidated aspartate) is attached at D125. The propeptide at 126–150 (AGAGNKLAGYGVTTVILSLISSIFF) is removed in mature form.

The protein belongs to the plant LTP family. As to expression, up-regulated in the epidermis of stems.

The protein resides in the cell membrane. Its function is as follows. Probable lipid transfer protein. The sequence is that of Non-specific lipid transfer protein GPI-anchored 7 from Arabidopsis thaliana (Mouse-ear cress).